The following is a 286-amino-acid chain: Puff II/9-1 protein (286 aa).

Positions 1–19 are cleaved as a signal peptide; sequence MKQFIVLTVVLLAIQELQG. The segment at 61 to 235 is helical; the sequence is ITAIKKDNDF…ENALNTLRCE (175 aa). N-linked (GlcNAc...) asparagine glycosylation occurs at N156.

The polypeptide is Puff II/9-1 protein (II/9-1) (Bradysia coprophila (Dark-winged fungus gnat)).